Here is a 243-residue protein sequence, read N- to C-terminus: MSATDRYSHQLLYATVRQRLLDDIAQGVYQAGQQIPTENELCTQYNVSRITIRKAISDLVADGVLIRWQGKGTFVQSQKVENALLTVSGFTDFGVSQGKATKEKVIEQERISAAPFCEKLNIPGNSEVFHLCRVMYLDKEPLFIDSSWIPLSRYPDFDEIYVEGSSTYQLFQERFDTRVVSDKKTIDIFAATRPQAKWLKCELGEPLFRISKIAFDQNDKPVHVSELFCRANRITLTIDNKRH.

Positions 10 to 78 constitute an HTH gntR-type domain; it reads QLLYATVRQR…QGKGTFVQSQ (69 aa). Residues 38–57 constitute a DNA-binding region (H-T-H motif); sequence ENELCTQYNVSRITIRKAIS.

Its pathway is carbohydrate metabolism; fructoselysine degradation [regulation]. Functionally, may regulate the transcription of the frlABCDR operon, involved in the utilization of fructoselysine and psicoselysine. The protein is Probable fructoselysine utilization operon transcriptional repressor (frlR) of Escherichia coli O157:H7.